The chain runs to 390 residues: L-rhamnonate dehydratase (390 aa).

Positions 19 and 45 each coordinate substrate. Mg(2+) contacts are provided by Asp-211, Glu-237, and Glu-265. The active-site Proton acceptor is His-315. Residue Glu-335 coordinates substrate.

It belongs to the mandelate racemase/muconate lactonizing enzyme family. RhamD subfamily. It depends on Mg(2+) as a cofactor.

It carries out the reaction L-rhamnonate = 2-dehydro-3-deoxy-L-rhamnonate + H2O. Catalyzes the dehydration of L-rhamnonate to 2-keto-3-deoxy-L-rhamnonate (KDR). In Saccharopolyspora erythraea (strain ATCC 11635 / DSM 40517 / JCM 4748 / NBRC 13426 / NCIMB 8594 / NRRL 2338), this protein is L-rhamnonate dehydratase.